We begin with the raw amino-acid sequence, 188 residues long: Heparin-binding hemagglutinin homolog (188 aa).

The segment at K162 to K188 is disordered. Basic residues predominate over residues A170–K188.

This sequence to M.tuberculosis HbhA.

In terms of biological role, might mediate adherence to host cells by binding sulfated glycoconjugates. In Mycobacterium leprae (strain TN), this protein is Heparin-binding hemagglutinin homolog (hbhA).